The sequence spans 350 residues: Ion-translocating oxidoreductase complex subunit D (350 aa).

Transmembrane regions (helical) follow at residues 25–45 (ALCLIPGILVQTLFFGFGSLI), 89–109 (IPPLAPWWLVVIGSLFAIIIV), and 124–144 (AMAGYVVLLVSFPLQMTSWVA). An FMN phosphoryl threonine modification is found at Thr-185. 5 helical membrane passes run 212–232 (SYGVGWFWVNLAYLAGGLVLL), 239–259 (WHISVGILAALFVCASFGFLI), 265–285 (VSPLFHWFSGGTMLAVFFIAT), 298–318 (LIFGASIGIIIYLIRTYGGYP), and 319–339 (DAVAFAVLLANMCAPFIDHYV).

Belongs to the NqrB/RnfD family. The complex is composed of six subunits: RnfA, RnfB, RnfC, RnfD, RnfE and RnfG. Requires FMN as cofactor.

Its subcellular location is the cell inner membrane. Functionally, part of a membrane-bound complex that couples electron transfer with translocation of ions across the membrane. The sequence is that of Ion-translocating oxidoreductase complex subunit D from Shewanella denitrificans (strain OS217 / ATCC BAA-1090 / DSM 15013).